A 2090-amino-acid chain; its full sequence is MDGECLANEQMCVGRQITNATHASTAVIEDMWTPYKHLYNTFQTAVSNRSGFTSDLEQCLKKYKHNFSNLLRNPPRSEKSRNLLRNALNEGVPMQGHSRKTKMSQDLADEAVILSDMFDLDEGFAVELLCTAQRQQKHHPGLSRGLVAVLLYYDGRKAISCTLRDMFQVVSGVSWNTELPKEITGLVTNYAESLVDGSGILGRLLQLLEEMDVDKECAMLTTNRAFGSKKHQNQVLGLYEDIQQALAMALFNWSAQRGLPRHIAIRLMHQLANRKNHDAGGNMDDVTLIMLMALLYAYDTSMLLVTEEPNEHTTRLPIFSDREFAECFLEELYAQSSWQAPRLNAIIAYSFGLTLASLRHAPLQLQATAISIINRDEMLIDEALGAQVFVFFHSLLLEKDLVYSTQFFYRRVHLLITDFIDFMNSKVSELRGRADESSHTIISFLNEGLEPPPNLDSNFELLMLCVAKMHGDPRVTIRLCNEYWGPGDPNGSTAFKNTSRSVSLFKFISLASDLLPQTLFKAYLKMISGLTRTDFSARCAFNMLRVPQMATGGKYAVSWDHFFTTLGNYYTSMRNDFNTNIGMSGETIYRTRSTPKAITQREAEHLVAVMGIIQAVAEHDEVSRIMICDHPNWQTPQVLLGLVACATPLFLKAEILHTLAALAKSKETARVIWFHLEASQIIPTVPVSRSYAQCSLLEEMEQIESRSEQYNLTRGILQLLYTLMTTNLPKSLGAGQRTPAYEGYLKSMINSVLLKFYNRAYKVPSEKWQVGAQCLKLLYYLLATYRPSAMDFLETVDEPPYPGFHVMMQLQLKSEMLQLLLCIVEEVRERLDNYNRFQGKKLLEECSLYALLILEAALAKQNAFFEAHSAANCPILLSGLNRMLLDLNPRSRKPDHVLNIIKYVTYNSWLPRHALAAIKILASVTQLPNVSTQILSMYGQGSNEKLEIRQGFVECLEMEVCVGKHDDDLLDQLALNNHVPYLGFGDDLDNEREMSGEREYSTIESQLELQAGDGALESKPASIELQLKEAIIKLFEMNLSQQLPNFVYFLLGVDVLREFMANGRQHLAIEMQSSCVNSVVLLLEKYMDKQRHSDKYCEHTARIVERIYHLFHGLCANRRTAETILRYFRLTCSDFLLRHLRSLPFRQHREDHVLHAMGHLLNCVSIDVKLAAKHGQMTRFNQMCDILLIGNGMERSSHGLSMELGHSLISQPSSSFLAMDVLPAGGSISAVAHGAGSASLGAPNTGVKSLKPSLLQETSQGLHVTRLLDILVLEAGTLSQPQLEFFDGHLITQLLRDCEASAEAGANSRANLINVRKLYYILTDELYMVQSIIASGQRKAISTEIMLLLNHAVNINRVRTQRCATLAFMAAWGQLVQVLFSNMPDAVLPATQRRQHIIDIVEKVLIKVQPIQPIIEISVQVSETVLLLLANLRYCCYQAEDQSPEDLAAEDSLSNGNGNAIGNDSQVNALCLGQRAIGTGSDGGSGGGRDIGSGGNSSNLRFILKNLVQWIMISEVKSQKLRINLYSSLLNCLRIAKRLRTDEHLEYQETLISRQESARTYNKEQRRDDRLRLKAMAAEVIGTFGEKLIDTICHDAVTGHDVCRMLALACLDMISELQAVSTLCDFVASRGYLKHILESLDQSSTALCGILQPVPDHLRPLYVYESRMAFLTRMANSNVGARLLLTEQALGVLSNMKVYDQQPDLKSSELNRNEPQTFLPSIDDRFRSILLPALSLCDAIVNSLGPRNNSAAVQVLNFLFAHIDMVEAMLRSATPYMDLGHLQQVAVISNLFARASTHELTALEDSVQLDLRNRLGRVQQLMIVVFGRFCVSEPTIRRMLQQDEEQQTNPTDDSKRLRVKYFLDIAANVSLYCRNVVTSHSKDSMTSKYLLTTVINDVTLLTGKMSSKKLTTIMHTILNQLKGSIGYYLSQKSIADNLLQQRASLPNISFGPNGKQSYIELSQRYNEKRSELRQAVFIAEQNLYLLWIHLDFYLRNTIDYANENRNAINESNMDDDNDMSVLNASQEEIVQLKQLLISTFNETFCTQLINASEDYSIKCKGFNGSLLRRIKALVQFAPITANDVNSSFDS.

Belongs to the NUP186/NUP192/NUP205 family. In terms of assembly, part of the nuclear pore complex (NPC).

It is found in the nucleus. Its subcellular location is the nuclear pore complex. Its function is as follows. Plays a role in the nuclear pore complex (NPC) assembly and maintenance, but with limited role in NPC permeability. Required for specific nuclear import pathways such as Mad import. In Drosophila melanogaster (Fruit fly), this protein is Nuclear pore complex protein Nup205.